The primary structure comprises 351 residues: DNA polymerase IV (351 aa).

In terms of domain architecture, UmuC spans 4-185 (IIHVDMDCFF…LPLAKIPGVG (182 aa)). Mg(2+) contacts are provided by aspartate 8 and aspartate 103. Residue glutamate 104 is part of the active site.

It belongs to the DNA polymerase type-Y family. In terms of assembly, monomer. Mg(2+) is required as a cofactor.

The protein localises to the cytoplasm. The catalysed reaction is DNA(n) + a 2'-deoxyribonucleoside 5'-triphosphate = DNA(n+1) + diphosphate. Functionally, poorly processive, error-prone DNA polymerase involved in untargeted mutagenesis. Copies undamaged DNA at stalled replication forks, which arise in vivo from mismatched or misaligned primer ends. These misaligned primers can be extended by PolIV. Exhibits no 3'-5' exonuclease (proofreading) activity. May be involved in translesional synthesis, in conjunction with the beta clamp from PolIII. The chain is DNA polymerase IV from Escherichia coli O157:H7.